The sequence spans 446 residues: Probable 1,4-beta-D-glucan cellobiohydrolase A (446 aa).

Residues 1 to 17 form the signal peptide; it reads MYQRALLFSALLSVSRA. An N-linked (GlcNAc...) asparagine glycan is attached at Asn81. The active-site Nucleophile is the Glu226. Residue Glu231 is the Proton donor of the active site. N-linked (GlcNAc...) asparagine glycans are attached at residues Asn284 and Asn333. A disordered region spans residues 399–420; that stretch reads TDADPSQPGVARGTCEQGAGDP.

This sequence belongs to the glycosyl hydrolase 7 (cellulase C) family.

It localises to the secreted. It carries out the reaction Hydrolysis of (1-&gt;4)-beta-D-glucosidic linkages in cellulose and cellotetraose, releasing cellobiose from the non-reducing ends of the chains.. In terms of biological role, the biological conversion of cellulose to glucose generally requires three types of hydrolytic enzymes: (1) Endoglucanases which cut internal beta-1,4-glucosidic bonds; (2) Exocellobiohydrolases that cut the disaccharide cellobiose from the non-reducing end of the cellulose polymer chain; (3) Beta-1,4-glucosidases which hydrolyze the cellobiose and other short cello-oligosaccharides to glucose. This Emericella nidulans (strain FGSC A4 / ATCC 38163 / CBS 112.46 / NRRL 194 / M139) (Aspergillus nidulans) protein is Probable 1,4-beta-D-glucan cellobiohydrolase A (cbhA).